The primary structure comprises 185 residues: Ribosome-recycling factor (185 aa).

Belongs to the RRF family.

It is found in the cytoplasm. Its function is as follows. Responsible for the release of ribosomes from messenger RNA at the termination of protein biosynthesis. May increase the efficiency of translation by recycling ribosomes from one round of translation to another. In Yersinia enterocolitica serotype O:8 / biotype 1B (strain NCTC 13174 / 8081), this protein is Ribosome-recycling factor.